A 764-amino-acid polypeptide reads, in one-letter code: Zinc finger CCCH domain-containing protein 24 (764 aa).

2 ANK repeats span residues 108-138 (EHRT…DVNR) and 143-175 (DGTT…DADA). The C3H1-type zinc finger occupies 321 to 348 (HYSCVPCPDFRKGVCRRGDMCEYAHGVF). Disordered stretches follow at residues 616–665 (QREK…DWGV) and 698–732 (KESP…EGPS). The segment covering 640-659 (SGVVGSPLSSSWSKWGSPSG) has biased composition (low complexity). Polar residues predominate over residues 705–716 (QVTTAESINSVG).

The polypeptide is Zinc finger CCCH domain-containing protein 24 (Oryza sativa subsp. japonica (Rice)).